The sequence spans 511 residues: Probable cytochrome P450 4d21 (511 aa).

Residue Cys-456 coordinates heme.

This sequence belongs to the cytochrome P450 family. Requires heme as cofactor.

Its subcellular location is the endoplasmic reticulum membrane. It is found in the microsome membrane. May be involved in the metabolism of insect hormones and in the breakdown of synthetic insecticides. This chain is Probable cytochrome P450 4d21 (Cyp4d21), found in Drosophila melanogaster (Fruit fly).